The following is a 259-amino-acid chain: Tonin (259 aa).

An N-terminal signal peptide occupies residues 1-18; the sequence is MWLQILSLVLSVGRIDAA. Positions 19–24 are cleaved as a propeptide — activation peptide; sequence PPGQSR. In terms of domain architecture, Peptidase S1 spans 25–256; sequence IVGGYKCEKN…FTSWIKKVMK (232 aa). 5 cysteine pairs are disulfide-bonded: C31/C171, C48/C64, C150/C217, C182/C196, and C207/C232. The active-site Charge relay system is the H63. H63 is a Zn(2+) binding site. N106 carries an N-linked (GlcNAc...) asparagine glycan. Zn(2+) is bound by residues H113 and H115. The Charge relay system role is filled by D118. A glycan (N-linked (GlcNAc...) asparagine) is linked at N189. Catalysis depends on S211, which acts as the Charge relay system.

This sequence belongs to the peptidase S1 family. Kallikrein subfamily. In terms of assembly, monomer. Requires Zn(2+) as cofactor. In terms of tissue distribution, found in submaxillary gland.

It carries out the reaction Preferential cleavage of Arg-|-Xaa bonds in small molecule substrates. Highly selective action to release kallidin (lysyl-bradykinin) from kininogen involves hydrolysis of Met-|-Xaa or Leu-|-Xaa.. This protein has both trypsin- and chymotrypsin-like activities, being able to release angiotensin II from angiotensin I or angiotensinogen. The chain is Tonin (Klk2) from Rattus norvegicus (Rat).